The sequence spans 79 residues: U-scoloptoxin(15)-Sm1a (79 aa).

A signal peptide spans 1–25 (MKMNVVVLSVVVLLLFIANIQQTEA).

This sequence belongs to the scoloptoxin-15 family. In terms of processing, contains 2 disulfide bonds. As to expression, expressed by the venom gland.

Its subcellular location is the secreted. The chain is U-scoloptoxin(15)-Sm1a from Scolopendra morsitans (Tanzanian blue ringleg centipede).